The following is a 420-amino-acid chain: MLTKAPRGTKDITPKEAYKWRYVENKFREICALYGYEEMVTPIFEHTELFKRSVGDTTDIVQKEMYSFKDKGDREITLKPEGTAGVVRAFIENKLYADTQPTKLFYVTPCFRYERPQAGRQRQFHQFGIEALGSDTPSMDAEIIALAVQFFNEVGLNDLVVSINSVGCPVCRKEYNALLKEYLDSKADILCDTCNERREKNPMRVIDCKNPTCKENIKDIPFIADHLCDDCKSHFDKLQEYLKEMNINFVIDKTIVRGLDYYRKTAFEIISNDIGAQSTVCGGGRYDGLVEQLGGPKGISGIGFGLGIERLLLTLEGNGIEIENPQSTDIFIVTIGEEANTRSFKLLKDLRQNHISADKDHIERSVKAQFKYSDKINSKFTIVIGDDELKNDTATLKNMKTSEQTTVKLSTLVEELKQKL.

This sequence belongs to the class-II aminoacyl-tRNA synthetase family. In terms of assembly, homodimer.

It is found in the cytoplasm. It carries out the reaction tRNA(His) + L-histidine + ATP = L-histidyl-tRNA(His) + AMP + diphosphate + H(+). The polypeptide is Histidine--tRNA ligase (Clostridioides difficile (strain 630) (Peptoclostridium difficile)).